Consider the following 647-residue polypeptide: Threonine--tRNA ligase (647 aa).

In terms of domain architecture, TGS spans Met1–Val60. The catalytic stretch occupies residues Asp242 to Pro533. The Zn(2+) site is built by Cys334, His385, and His510.

Belongs to the class-II aminoacyl-tRNA synthetase family. As to quaternary structure, homodimer. Requires Zn(2+) as cofactor.

The protein localises to the cytoplasm. It catalyses the reaction tRNA(Thr) + L-threonine + ATP = L-threonyl-tRNA(Thr) + AMP + diphosphate + H(+). Functionally, catalyzes the attachment of threonine to tRNA(Thr) in a two-step reaction: L-threonine is first activated by ATP to form Thr-AMP and then transferred to the acceptor end of tRNA(Thr). Also edits incorrectly charged L-seryl-tRNA(Thr). This chain is Threonine--tRNA ligase, found in Solidesulfovibrio magneticus (strain ATCC 700980 / DSM 13731 / RS-1) (Desulfovibrio magneticus).